Reading from the N-terminus, the 619-residue chain is 1-deoxy-D-xylulose-5-phosphate synthase (619 aa).

Thiamine diphosphate-binding positions include histidine 80 and 121–123 (GHS). Aspartate 152 contributes to the Mg(2+) binding site. Thiamine diphosphate-binding positions include 153–154 (GA), asparagine 181, tyrosine 288, and glutamate 370. Asparagine 181 is a Mg(2+) binding site.

The protein belongs to the transketolase family. DXPS subfamily. As to quaternary structure, homodimer. It depends on Mg(2+) as a cofactor. Requires thiamine diphosphate as cofactor.

It carries out the reaction D-glyceraldehyde 3-phosphate + pyruvate + H(+) = 1-deoxy-D-xylulose 5-phosphate + CO2. It participates in metabolic intermediate biosynthesis; 1-deoxy-D-xylulose 5-phosphate biosynthesis; 1-deoxy-D-xylulose 5-phosphate from D-glyceraldehyde 3-phosphate and pyruvate: step 1/1. Catalyzes the acyloin condensation reaction between C atoms 2 and 3 of pyruvate and glyceraldehyde 3-phosphate to yield 1-deoxy-D-xylulose-5-phosphate (DXP). In Yersinia pestis (strain Pestoides F), this protein is 1-deoxy-D-xylulose-5-phosphate synthase.